The primary structure comprises 151 residues: Small ribosomal subunit protein uS19 (151 aa).

Ala2 is subject to N-acetylalanine.

It belongs to the universal ribosomal protein uS19 family.

Negatively regulates lifespan. The polypeptide is Small ribosomal subunit protein uS19 (Caenorhabditis elegans).